We begin with the raw amino-acid sequence, 389 residues long: 5-hydroxytryptamine receptor 1B (389 aa).

The disordered stretch occupies residues 1 to 27; it reads MEAAGAPCAPPPPAGSQTGAPPANLSS. The Extracellular segment spans residues 1 to 45; sequence MEAAGAPCAPPPPAGSQTGAPPANLSSAPHNCSAEGYIYQDSVAL. Polar residues predominate over residues 16–27; the sequence is SQTGAPPANLSS. 2 N-linked (GlcNAc...) asparagine glycosylation sites follow: Asn24 and Asn31. The helical transmembrane segment at 46–71 threads the bilayer; it reads PWKVLLVILLALITLATTLSNAFVIA. Residues 72-85 are Cytoplasmic-facing; sequence TVYRTRKLHTPANY. Residues 86–110 traverse the membrane as a helical segment; the sequence is LIASLAVTDLLVSILVMPISTMYTV. At 111-118 the chain is on the extracellular side; the sequence is TGRWTLGQ. The helical transmembrane segment at 119–144 threads the bilayer; the sequence is VVCDLWLSSDITCCTASILHLCVIAL. A disulfide bridge connects residues Cys121 and Cys198. Ergotamine is bound by residues Asp128 and Thr133. Positions 145–147 match the DRY motif; important for ligand-induced conformation changes and signaling motif; that stretch reads DRY. Residues 145–164 are Cytoplasmic-facing; it reads DRYWAITDAVEYSAKRTPKR. The helical transmembrane segment at 165 to 183 threads the bilayer; that stretch reads AAVMIALVWVFSISISLPP. Over 184–204 the chain is Extracellular; that stretch reads FFWRQAKAEEEVSDCVVNTDH. Val200 serves as a coordination point for ergotamine. The helical transmembrane segment at 205–228 threads the bilayer; it reads ILYTVYSTVGAFYFPTLLLIALYG. Residues 229–314 are Cytoplasmic-facing; it reads RIYVEARSRI…AARERKATKT (86 aa). Residues 258–271 show a composition bias toward polar residues; the sequence is DSPGSTSSVTSVNS. The disordered stretch occupies residues 258–281; sequence DSPGSTSSVTSVNSRAPDVPSESG. A helical membrane pass occupies residues 315–336; the sequence is LGIILGAFIVCWLPFFIISLVM. Residues 337 to 346 lie on the Extracellular side of the membrane; it reads PICKDACWFH. The chain crosses the membrane as a helical span at residues 347 to 369; it reads LAIFDFFTWLGYLNSLINPIIYT. The short motif at 364-368 is the NPxxY motif; important for ligand-induced conformation changes and signaling element; it reads NPIIY. At 370-389 the chain is on the cytoplasmic side; it reads MSNEDFKQAFHKLIRFKCAG. A lipid anchor (S-palmitoyl cysteine) is attached at Cys387.

Belongs to the G-protein coupled receptor 1 family. As to quaternary structure, homodimer. Heterodimer with HTR1D. Post-translationally, phosphorylated. Desensitization of the receptor may be mediated by its phosphorylation. Palmitoylated.

Its subcellular location is the cell membrane. Functionally, G-protein coupled receptor for 5-hydroxytryptamine (serotonin). Also functions as a receptor for ergot alkaloid derivatives, various anxiolytic and antidepressant drugs and other psychoactive substances, such as lysergic acid diethylamide (LSD). Ligand binding causes a conformation change that triggers signaling via guanine nucleotide-binding proteins (G proteins) and modulates the activity of downstream effectors, such as adenylate cyclase. HTR1B is coupled to G(i)/G(o) G alpha proteins and mediates inhibitory neurotransmission by inhibiting adenylate cyclase activity. Arrestin family members inhibit signaling via G proteins and mediate activation of alternative signaling pathways. Regulates the release of 5-hydroxytryptamine, dopamine and acetylcholine in the brain, and thereby affects neural activity, nociceptive processing, pain perception, mood and behavior. Besides, plays a role in vasoconstriction of cerebral arteries. This is 5-hydroxytryptamine receptor 1B (HTR1B) from Canis lupus familiaris (Dog).